Reading from the N-terminus, the 72-residue chain is Defensin-like protein 230 (72 aa).

Residues 1-27 (MEKKSLACLSFLLLVLFVAQEIVVSEA) form the signal peptide. Disulfide bonds link cysteine 30-cysteine 72, cysteine 41-cysteine 60, cysteine 45-cysteine 66, and cysteine 49-cysteine 68.

It belongs to the DEFL family.

The protein localises to the secreted. The protein is Defensin-like protein 230 (PI230) of Pisum sativum (Garden pea).